We begin with the raw amino-acid sequence, 906 residues long: Probable RNA-directed DNA polymerase from transposon BS (906 aa).

One can recognise a Reverse transcriptase domain in the interval 482-758; that stretch reads AILRVQFFPK…SQAKYLGITL (277 aa).

Requires Mg(2+) as cofactor. It depends on Mn(2+) as a cofactor.

The enzyme catalyses DNA(n) + a 2'-deoxyribonucleoside 5'-triphosphate = DNA(n+1) + diphosphate. The chain is Probable RNA-directed DNA polymerase from transposon BS from Drosophila melanogaster (Fruit fly).